Here is a 275-residue protein sequence, read N- to C-terminus: Orotidine 5'-phosphate decarboxylase (275 aa).

Lys101 functions as the Proton donor in the catalytic mechanism.

The protein belongs to the OMP decarboxylase family. Type 2 subfamily.

It carries out the reaction orotidine 5'-phosphate + H(+) = UMP + CO2. The protein operates within pyrimidine metabolism; UMP biosynthesis via de novo pathway; UMP from orotate: step 2/2. The sequence is that of Orotidine 5'-phosphate decarboxylase from Leptospira interrogans serogroup Icterohaemorrhagiae serovar Lai (strain 56601).